The sequence spans 479 residues: Anaerobic nitric oxide reductase flavorubredoxin (479 aa).

The interval 30–210 (LRGSSYNSYL…PFSRLVTPKI (181 aa)) is zinc metallo-hydrolase. Residues histidine 79, glutamate 81, aspartate 83, histidine 147, aspartate 166, and histidine 227 each coordinate Fe cation. The 140-residue stretch at 254–393 (ITIFYDTMSN…LCREHGREIA (140 aa)) folds into the Flavodoxin-like domain. FMN is bound by residues 260–264 (TMSNN) and 342–369 (AFGS…EMSL). Positions 423-474 (GPRMQCSVCQWIYDPAKGEPMQDVAPGTPWSEVPDNFLCPECSLGKDVFDEL) constitute a Rubredoxin-like domain. Fe cation-binding residues include cysteine 428, cysteine 431, cysteine 461, and cysteine 464.

This sequence in the N-terminal section; belongs to the zinc metallo-hydrolase group 3 family. In terms of assembly, homotetramer. The cofactor is Fe cation. Requires FMN as cofactor.

It localises to the cytoplasm. It participates in nitrogen metabolism; nitric oxide reduction. Functionally, anaerobic nitric oxide reductase; uses NADH to detoxify nitric oxide (NO), protecting several 4Fe-4S NO-sensitive enzymes. Has at least 2 reductase partners, only one of which (NorW, flavorubredoxin reductase) has been identified. NO probably binds to the di-iron center; electrons enter from the NorW at rubredoxin and are transferred sequentially to the FMN center and the di-iron center. Also able to function as an aerobic oxygen reductase. The sequence is that of Anaerobic nitric oxide reductase flavorubredoxin from Escherichia coli O6:H1 (strain CFT073 / ATCC 700928 / UPEC).